The following is a 209-amino-acid chain: Nascent polypeptide-associated complex subunit alpha (209 aa).

Residues M1 to E21 show a composition bias toward basic and acidic residues. 2 disordered regions span residues M1 to N51 and Q121 to I175. Residues H22–G36 show a composition bias toward acidic residues. The 66-residue stretch at N49–A114 folds into the NAC-A/B domain. Basic and acidic residues predominate over residues A127–D150. Residues K151–D166 show a composition bias toward acidic residues. The region spanning L170–I209 is the UBA domain.

This sequence belongs to the NAC-alpha family. In terms of assembly, part of the nascent polypeptide-associated complex (NAC), consisting of EGD2 and EGD1. NAC associates with ribosomes via EGD1.

Its subcellular location is the cytoplasm. The protein resides in the nucleus. Component of the nascent polypeptide-associated complex (NAC), a dynamic component of the ribosomal exit tunnel, protecting the emerging polypeptides from interaction with other cytoplasmic proteins to ensure appropriate nascent protein targeting. The NAC complex also promotes mitochondrial protein import by enhancing productive ribosome interactions with the outer mitochondrial membrane and blocks the inappropriate interaction of ribosomes translating non-secretory nascent polypeptides with translocation sites in the membrane of the endoplasmic reticulum. EGD2 may also be involved in transcription regulation. In Gibberella zeae (strain ATCC MYA-4620 / CBS 123657 / FGSC 9075 / NRRL 31084 / PH-1) (Wheat head blight fungus), this protein is Nascent polypeptide-associated complex subunit alpha (EGD2).